The sequence spans 365 residues: Alanine racemase (365 aa).

Lys32 functions as the Proton acceptor; specific for D-alanine in the catalytic mechanism. Lys32 is modified (N6-(pyridoxal phosphate)lysine). Arg128 serves as a coordination point for substrate. Tyr257 functions as the Proton acceptor; specific for L-alanine in the catalytic mechanism. Met305 serves as a coordination point for substrate.

This sequence belongs to the alanine racemase family. Requires pyridoxal 5'-phosphate as cofactor.

It carries out the reaction L-alanine = D-alanine. The protein operates within amino-acid biosynthesis; D-alanine biosynthesis; D-alanine from L-alanine: step 1/1. Its function is as follows. Catalyzes the interconversion of L-alanine and D-alanine. May also act on other amino acids. This is Alanine racemase (alr) from Francisella tularensis subsp. tularensis (strain WY96-3418).